Reading from the N-terminus, the 922-residue chain is Non-centrosomal microtubule array protein 1 (922 aa).

Residues 1 to 10 show a composition bias toward polar residues; that stretch reads MSNERVSTGS. Disordered regions lie at residues 1–134, 250–277, 465–491, and 533–563; these read MSNE…HLPP, PVRL…TVPR, KSRH…QMNL, and TQKE…SNLS. 2 stretches are compositionally biased toward basic and acidic residues: residues 43–54 and 70–94; these read SMERKDMPDRPK and PKDR…KECA. Low complexity predominate over residues 99–113; that stretch reads SNTSSEHSSRSNSST. 2 stretches are compositionally biased toward basic and acidic residues: residues 256–276 and 468–484; these read RGDT…DTVP and HLSE…ERRG. A compositionally biased stretch (low complexity) spans 539–563; sequence SHSTPSQSRHSSSKSSHFNGSSNLS. A coiled-coil region spans residues 564–728; it reads TSEQLRLQEM…RSVSTLRLEQ (165 aa).

It is found in the cytoplasm. It localises to the cytoskeleton. The protein resides in the apical cell membrane. Its subcellular location is the cell junction. The protein localises to the hemidesmosome. It is found in the adherens junction. Functionally, plays a role in the assembly of microtubule arrays in the germline acting redundantly with ptrn-1 to control circumferential microtubule assembly along the body which is necessary for larval development, viability, and morphology and integrity of the epidermis. Required for microtubule stability and anchorage by binding to microtubule minus ends. Recruited to hemidesomosomes in early embryonic elongation to direct the nucleation and growth of non-centrosomal microtubules. In terms of biological role, required for normal nuclear migration in the embryonic epidermis. Directs the assembly of non-centrosomal microtubule arrays that determine the position of nuclei within intracellular compartments in the epidermis and this is independent of ptrn-1 activity. The polypeptide is Non-centrosomal microtubule array protein 1 (Caenorhabditis elegans).